A 32-amino-acid polypeptide reads, in one-letter code: Photosystem II reaction center protein T (32 aa).

The chain crosses the membrane as a helical span at residues 3-23 (ALVYTFLLIGTLIVIFFAVFF).

The protein belongs to the PsbT family. PSII is composed of 1 copy each of membrane proteins PsbA, PsbB, PsbC, PsbD, PsbE, PsbF, PsbH, PsbI, PsbJ, PsbK, PsbL, PsbM, PsbT, PsbX, PsbY, PsbZ, Psb30/Ycf12, at least 3 peripheral proteins of the oxygen-evolving complex and a large number of cofactors. It forms dimeric complexes.

The protein localises to the plastid. It localises to the chloroplast thylakoid membrane. Found at the monomer-monomer interface of the photosystem II (PS II) dimer, plays a role in assembly and dimerization of PSII. PSII is a light-driven water plastoquinone oxidoreductase, using light energy to abstract electrons from H(2)O, generating a proton gradient subsequently used for ATP formation. This chain is Photosystem II reaction center protein T, found in Phaeodactylum tricornutum (strain CCAP 1055/1).